Here is a 128-residue protein sequence, read N- to C-terminus: Fluoride-specific ion channel FluC (128 aa).

The next 4 helical transmembrane spans lie at valine 4–tryptophan 24, phenylalanine 35–alanine 55, phenylalanine 67–methionine 87, and leucine 99–leucine 119. Na(+) is bound by residues glycine 74 and threonine 77.

Belongs to the fluoride channel Fluc/FEX (TC 1.A.43) family.

It is found in the cell inner membrane. The catalysed reaction is fluoride(in) = fluoride(out). Its activity is regulated as follows. Na(+) is not transported, but it plays an essential structural role and its presence is essential for fluoride channel function. Functionally, fluoride-specific ion channel. Important for reducing fluoride concentration in the cell, thus reducing its toxicity. The sequence is that of Fluoride-specific ion channel FluC from Parabacteroides distasonis (strain ATCC 8503 / DSM 20701 / CIP 104284 / JCM 5825 / NCTC 11152).